Here is a 618-residue protein sequence, read N- to C-terminus: Carotenoid cleavage dioxygenase 7, chloroplastic (618 aa).

The transit peptide at 1 to 31 directs the protein to the chloroplast; the sequence is MSLPIPPKFLPPLKSPPIHHHQTPPPLAPPR. A disordered region spans residues 11-34; sequence PPLKSPPIHHHQTPPPLAPPRAAI. 4 residues coordinate Fe cation: histidine 266, histidine 319, histidine 398, and histidine 612.

This sequence belongs to the carotenoid oxygenase family. The cofactor is Fe(2+). As to expression, expressed in flowers, siliques, inflorescence stems, petiole, leaves and roots.

The protein localises to the plastid. It localises to the chloroplast. It carries out the reaction 9-cis-beta-carotene + O2 = 9-cis-10'-apo-beta-carotenal + beta-ionone. Functionally, involved in strigolactones biosynthesis by cleaving asymmetrically a variety of linear and cyclic carotenoids at the 9-10 double bond. Produces one C(13) beta-ionone and the C(27) 10'-apo-beta-carotenal. Strigolactones are hormones that inhibit tillering and shoot branching through the MAX-dependent pathway, contribute to the regulation of shoot architectural response to phosphate-limiting conditions and function as rhizosphere signal that stimulates hyphal branching of arbuscular mycorrhizal fungi and trigger seed germination of root parasitic weeds. No activity on lycopene, lutein, zeaxanthin, violaxanthin or neoxanthin. Probably not involved in abscisic acid biosynthesis. The protein is Carotenoid cleavage dioxygenase 7, chloroplastic (CCD7) of Arabidopsis thaliana (Mouse-ear cress).